A 968-amino-acid chain; its full sequence is Isoleucine--tRNA ligase (968 aa).

A 'HIGH' region motif is present at residues 68–78 (PYANGALHMGH). L-isoleucyl-5'-AMP is bound at residue Glu-582. Positions 623 to 627 (KMSKS) match the 'KMSKS' region motif. Lys-626 contributes to the ATP binding site. Positions 936, 939, 956, and 959 each coordinate Zn(2+).

The protein belongs to the class-I aminoacyl-tRNA synthetase family. IleS type 1 subfamily. In terms of assembly, monomer. Requires Zn(2+) as cofactor.

The protein resides in the cytoplasm. The catalysed reaction is tRNA(Ile) + L-isoleucine + ATP = L-isoleucyl-tRNA(Ile) + AMP + diphosphate. Functionally, catalyzes the attachment of isoleucine to tRNA(Ile). As IleRS can inadvertently accommodate and process structurally similar amino acids such as valine, to avoid such errors it has two additional distinct tRNA(Ile)-dependent editing activities. One activity is designated as 'pretransfer' editing and involves the hydrolysis of activated Val-AMP. The other activity is designated 'posttransfer' editing and involves deacylation of mischarged Val-tRNA(Ile). The sequence is that of Isoleucine--tRNA ligase from Prochlorococcus marinus (strain AS9601).